The chain runs to 380 residues: Actin-like protein arp10 (380 aa).

The protein belongs to the actin family. ARP10 subfamily.

The protein resides in the cytoplasm. It is found in the cytoskeleton. The protein localises to the nucleus. The polypeptide is Actin-like protein arp10 (arp10) (Schizosaccharomyces pombe (strain 972 / ATCC 24843) (Fission yeast)).